We begin with the raw amino-acid sequence, 172 residues long: Large ribosomal subunit protein uL10 (172 aa).

This sequence belongs to the universal ribosomal protein uL10 family. As to quaternary structure, part of the ribosomal stalk of the 50S ribosomal subunit. The N-terminus interacts with L11 and the large rRNA to form the base of the stalk. The C-terminus forms an elongated spine to which L12 dimers bind in a sequential fashion forming a multimeric L10(L12)X complex.

Functionally, forms part of the ribosomal stalk, playing a central role in the interaction of the ribosome with GTP-bound translation factors. The polypeptide is Large ribosomal subunit protein uL10 (Prosthecochloris aestuarii (strain DSM 271 / SK 413)).